Reading from the N-terminus, the 259-residue chain is Ribosomal RNA small subunit methyltransferase A (259 aa).

S-adenosyl-L-methionine-binding residues include N13, L15, G39, E60, D84, and N101.

It belongs to the class I-like SAM-binding methyltransferase superfamily. rRNA adenine N(6)-methyltransferase family. RsmA subfamily.

Its subcellular location is the cytoplasm. It catalyses the reaction adenosine(1518)/adenosine(1519) in 16S rRNA + 4 S-adenosyl-L-methionine = N(6)-dimethyladenosine(1518)/N(6)-dimethyladenosine(1519) in 16S rRNA + 4 S-adenosyl-L-homocysteine + 4 H(+). Its function is as follows. Specifically dimethylates two adjacent adenosines (A1518 and A1519) in the loop of a conserved hairpin near the 3'-end of 16S rRNA in the 30S particle. May play a critical role in biogenesis of 30S subunits. This is Ribosomal RNA small subunit methyltransferase A from Mesomycoplasma hyopneumoniae (strain J / ATCC 25934 / NCTC 10110) (Mycoplasma hyopneumoniae).